Here is an 84-residue protein sequence, read N- to C-terminus: Large ribosomal subunit protein bL27 (84 aa).

The disordered stretch occupies residues 1–22; the sequence is MAHKKGASSTRNGRDSNAQRLG. Positions 7–19 are enriched in polar residues; sequence ASSTRNGRDSNAQ.

This sequence belongs to the bacterial ribosomal protein bL27 family.

This chain is Large ribosomal subunit protein bL27, found in Streptomyces avermitilis (strain ATCC 31267 / DSM 46492 / JCM 5070 / NBRC 14893 / NCIMB 12804 / NRRL 8165 / MA-4680).